An 86-amino-acid chain; its full sequence is Phosphocarrier protein HPr (86 aa).

In terms of domain architecture, HPr spans 1-86 (MVKKEAIIKA…LAELIESFKE (86 aa)). His15 functions as the Pros-phosphohistidine intermediate in the catalytic mechanism.

The protein belongs to the HPr family.

The protein localises to the cytoplasm. Functionally, general (non sugar-specific) component of the phosphoenolpyruvate-dependent sugar phosphotransferase system (sugar PTS). This major carbohydrate active-transport system catalyzes the phosphorylation of incoming sugar substrates concomitantly with their translocation across the cell membrane. The phosphoryl group from phosphoenolpyruvate (PEP) is transferred to the phosphoryl carrier protein HPr by enzyme I. Phospho-HPr then transfers it to the PTS EIIA domain. The sequence is that of Phosphocarrier protein HPr (ptsH) from Borreliella burgdorferi (strain ATCC 35210 / DSM 4680 / CIP 102532 / B31) (Borrelia burgdorferi).